A 763-amino-acid chain; its full sequence is Amine oxidase [copper-containing] 3 (763 aa).

At 1 to 6 (MNQKTT) the chain is on the cytoplasmic side. Residues 7 to 27 (LVLLALAVITIFALVCVLIAG) traverse the membrane as a helical; Signal-anchor for type II membrane protein segment. Over 28 to 763 (RGGDGGEASQ…AFSHGGFFTN (736 aa)) the chain is Extracellular. N-linked (GlcNAc...) asparagine glycosylation occurs at asparagine 137. A disulfide bond links cysteine 198 and cysteine 199. Residues asparagine 232 and asparagine 294 are each glycosylated (N-linked (GlcNAc...) asparagine). The active-site Proton acceptor is the aspartate 386. A disulfide bond links cysteine 404 and cysteine 430. The active-site Schiff-base intermediate with substrate; via topaquinone is the tyrosine 471. Tyrosine 471 carries the 2',4',5'-topaquinone modification. Residues histidine 520 and histidine 522 each coordinate Cu(2+). Ca(2+)-binding residues include aspartate 529, leucine 530, aspartate 531, and glutamate 572. Asparagine 618 carries N-linked (GlcNAc...) asparagine glycosylation. Residues glutamate 641, phenylalanine 663, and asparagine 665 each contribute to the Ca(2+) site. Residue asparagine 666 is glycosylated (N-linked (GlcNAc...) asparagine). The Ca(2+) site is built by glutamate 667, aspartate 673, and leucine 674. Histidine 684 is a Cu(2+) binding site. Cysteine 734 and cysteine 741 are oxidised to a cystine.

The protein belongs to the copper/topaquinone oxidase family. In terms of assembly, homodimer; disulfide-linked. Probably forms heterodimers with AOC2. The cofactor is Cu(2+). Ca(2+) serves as cofactor. Requires L-topaquinone as cofactor. Topaquinone (TPQ) is generated by copper-dependent autoxidation of a specific tyrosyl residue. In terms of processing, N- and O-glycosylated.

The protein resides in the cell membrane. It catalyses the reaction methylamine + O2 + H2O = formaldehyde + H2O2 + NH4(+). The enzyme catalyses benzylamine + O2 + H2O = benzaldehyde + H2O2 + NH4(+). It carries out the reaction 2-phenylethylamine + O2 + H2O = 2-phenylacetaldehyde + H2O2 + NH4(+). Its function is as follows. Catalyzes the oxidative deamination of primary amines to the corresponding aldehydes with the concomitant production of hydrogen peroxide and ammonia. Has a preference for the primary monoamines methylamine and benzylamine. Could also act on 2-phenylethylamine but much less efficiently. At endothelial cells surface can also function as a cell adhesion protein that participates in lymphocyte extravasation and recirculation by mediating the binding of lymphocytes to peripheral lymph node vascular endothelial cells in an L-selectin-independent fashion. The chain is Amine oxidase [copper-containing] 3 from Bos taurus (Bovine).